The following is a 130-amino-acid chain: Small ribosomal subunit protein uS9 (130 aa).

This sequence belongs to the universal ribosomal protein uS9 family.

The sequence is that of Small ribosomal subunit protein uS9 from Mycoplasmoides gallisepticum (strain R(low / passage 15 / clone 2)) (Mycoplasma gallisepticum).